We begin with the raw amino-acid sequence, 444 residues long: Mitogen-activated protein kinase HOG1 (444 aa).

One can recognise a Protein kinase domain in the interval 22 to 301; sequence YTNLNPVGMG…AADALAHPYL (280 aa). ATP-binding positions include 28-36 and Lys51; that span reads VGMGAFGLV. Asp143 functions as the Proton acceptor in the catalytic mechanism. A Phosphothreonine modification is found at Thr173. The TXY motif lies at 173-175; that stretch reads TGY. A Phosphotyrosine modification is found at Tyr175. Residues 371 to 393 are compositionally biased toward low complexity; sequence ASKQQQQQQHQTEEQTQQTIAST. The disordered stretch occupies residues 371-444; the sequence is ASKQQQQQQH…QADQYVSKFK (74 aa). The segment covering 394–405 has biased composition (polar residues); the sequence is PPQAQVTPQQLE. The span at 406–419 shows a compositional bias: low complexity; that stretch reads SGANSNSNSNPSFS. Positions 427–438 are enriched in polar residues; it reads ETLTNFANQADQ.

Belongs to the protein kinase superfamily. Ser/Thr protein kinase family. MAP kinase subfamily. HOG1 sub-subfamily. It depends on Mg(2+) as a cofactor. In terms of processing, dually phosphorylated on Thr-173 and Tyr-175, which activates the enzyme.

The protein resides in the cytoplasm. It localises to the nucleus. The catalysed reaction is L-seryl-[protein] + ATP = O-phospho-L-seryl-[protein] + ADP + H(+). The enzyme catalyses L-threonyl-[protein] + ATP = O-phospho-L-threonyl-[protein] + ADP + H(+). Its activity is regulated as follows. Activated by tyrosine and threonine phosphorylation. Proline-directed serine/threonine-protein kinase involved in a signal transduction pathway that is activated by changes in the osmolarity of the extracellular environment. Controls osmotic regulation of transcription of target genes. This Kluyveromyces lactis (strain ATCC 8585 / CBS 2359 / DSM 70799 / NBRC 1267 / NRRL Y-1140 / WM37) (Yeast) protein is Mitogen-activated protein kinase HOG1 (HOG1).